Here is a 429-residue protein sequence, read N- to C-terminus: Acetylornithine aminotransferase (429 aa).

Pyridoxal 5'-phosphate is bound by residues 126–127 (GA) and Phe-160. Arg-163 is a binding site for N(2)-acetyl-L-ornithine. 251-254 (DEVQ) provides a ligand contact to pyridoxal 5'-phosphate. Position 280 is an N6-(pyridoxal phosphate)lysine (Lys-280). Residue Ser-307 coordinates N(2)-acetyl-L-ornithine. Thr-308 contributes to the pyridoxal 5'-phosphate binding site.

The protein belongs to the class-III pyridoxal-phosphate-dependent aminotransferase family. ArgD subfamily. As to quaternary structure, homodimer. Pyridoxal 5'-phosphate is required as a cofactor.

It localises to the cytoplasm. The catalysed reaction is N(2)-acetyl-L-ornithine + 2-oxoglutarate = N-acetyl-L-glutamate 5-semialdehyde + L-glutamate. It participates in amino-acid biosynthesis; L-arginine biosynthesis; N(2)-acetyl-L-ornithine from L-glutamate: step 4/4. With respect to regulation, N-acetylornithine aminotransferase activity is stimulated by the addition of Mg(2+), Ca(2+) or Mn(2+), and inhibited by the addition of Zn(2+), Cu(2+), Co(2+) or Ni(2+). Catalyzes the reversible conversion of N-acetylornithine to N-acetylglutamate-5-semialdehyde. In vitro, also shows very low ornithine aminotransferase (OAT) and gamma-aminobutyrate aminotransferase (GABA-AT) activity, catalyzing the conversion of ornithine (Orn) to glutamate-5-semialdehyde and of gamma-aminobutyric acid (GABA) to succinate semialdehyde. It has been shown to function as a GABA-AT and contributes to closing the tricarboxylic acid cycle of Synechocystis sp. PCC6803 via the GABA shunt. However, the catalytic efficiency toward N-acetylornithine is 2500-fold and 10700-fold higher than that toward ornithine and gamma-aminobutyrate, respectively, indicating that the protein mainly functions as an N-acetylornithine aminotransferase. The polypeptide is Acetylornithine aminotransferase (Synechocystis sp. (strain ATCC 27184 / PCC 6803 / Kazusa)).